Reading from the N-terminus, the 355-residue chain is Neurogenic differentiation factor 1 (355 aa).

Positions Met1–Ala93 are disordered. Residues Asp58 to Asp77 show a composition bias toward acidic residues. Over residues Pro80–Lys92 the composition is skewed to basic residues. Residues Lys86 to Lys92 carry the Nuclear localization signal motif. A bHLH domain is found at Leu100 to Leu152. Phosphoserine occurs at positions 161, 258, 265, and 273. Ser334 bears the Phosphoserine; by CaMK2 mark.

Efficient DNA-binding requires dimerization with another bHLH protein. Heterodimer with TCF3/E47; the heterodimer is inhibited in presence of ID2, but not NR0B2, to E-box element. Interacts with EP300; the interaction is inhibited by NR0B2. Interacts with RREB1. Interacts with ATOH8. Post-translationally, phosphorylated. In islet cells, phosphorylated on Ser-273 upon glucose stimulation; which may be required for nuclear localization. In activated neurons, phosphorylated on Ser-334; which promotes dendritic growth. Phosphorylated by MAPK1; phosphorylation regulates heterodimerization and DNA-binding activities. Phosphorylation on Ser-265 and Ser-273 increases transactivation on the insulin promoter in glucose-stimulated insulinoma cells. As to expression, most abundant in pancreatic alpha- and beta-cells, less in brain and intestine.

It localises to the cytoplasm. The protein localises to the nucleus. Acts as a transcriptional activator: mediates transcriptional activation by binding to E box-containing promoter consensus core sequences 5'-CANNTG-3'. Associates with the p300/CBP transcription coactivator complex to stimulate transcription of the secretin gene as well as the gene encoding the cyclin-dependent kinase inhibitor CDKN1A. Contributes to the regulation of several cell differentiation pathways, like those that promote the formation of early retinal ganglion cells, inner ear sensory neurons, granule cells forming either the cerebellum or the dentate gyrus cell layer of the hippocampus, endocrine islet cells of the pancreas and enteroendocrine cells of the small intestine. Together with PAX6 or SIX3, is required for the regulation of amacrine cell fate specification. Also required for dendrite morphogenesis and maintenance in the cerebellar cortex. Associates with chromatin to enhancer regulatory elements in genes encoding key transcriptional regulators of neurogenesis. The sequence is that of Neurogenic differentiation factor 1 (NEUROD1) from Mesocricetus auratus (Golden hamster).